A 406-amino-acid chain; its full sequence is Phosphatidylinositol 5-phosphate 4-kinase type-2 alpha (406 aa).

The residue at position 2 (Ala2) is an N-acetylalanine. Thr3 bears the Phosphothreonine mark. A Phosphoserine modification is found at Ser14. A PIPK domain is found at 33-405; the sequence is ASDPLLSVLM…RFLDFIGHIL (373 aa). The required for interaction with PIP5K1A stretch occupies residues 59-65; it reads VMLMPDD. N6-acetyllysine is present on residues Lys89 and Lys145. Residues 288-329 are disordered; the sequence is QEEVECEENDGEEEGESDGTHPVGTPPDSPGNTLNSSPPLAP. Residues 289–304 show a composition bias toward acidic residues; it reads EEVECEENDGEEEGES.

As to quaternary structure, homodimer. Interacts with PIP4K2B; the interaction may regulate localization to the nucleus. Probably interacts with PIP5K1A; the interaction inhibits PIP5K1A kinase activity. In terms of processing, phosphorylated in tyrosines. Phosphorylation is induced by light and increases kinase activity. Expressed ubiquitously, with high levels in the brain. Present in most tissues, except notably skeletal muscle and small intestine.

The protein resides in the cell membrane. Its subcellular location is the nucleus. It localises to the lysosome. It is found in the cytoplasm. The protein localises to the photoreceptor inner segment. The protein resides in the cell projection. Its subcellular location is the cilium. It localises to the photoreceptor outer segment. It catalyses the reaction a 1,2-diacyl-sn-glycero-3-phospho-(1D-myo-inositol-5-phosphate) + ATP = a 1,2-diacyl-sn-glycero-3-phospho-(1D-myo-inositol-4,5-bisphosphate) + ADP + H(+). It carries out the reaction 1,2-dihexadecanoyl-sn-glycero-3-phospho-(1D-myo-inositol-5-phosphate) + ATP = 1,2-dihexadecanoyl-sn-glycero-3-phospho-(1D-myo-inositol-4,5-bisphosphate) + ADP + H(+). The catalysed reaction is 1,2-dihexadecanoyl-sn-glycero-3-phospho-(1D-myo-inositol-5-phosphate) + GTP = 1,2-dihexadecanoyl-sn-glycero-3-phospho-(1D-myo-inositol-4,5-bisphosphate) + GDP + H(+). Its activity is regulated as follows. In rod outer segments, activated by light. Inhibited by I-OMe tyrphostin AG-538 (I-OMe-AG-538), acting as an ATP-competitive inhibitor. In terms of biological role, catalyzes the phosphorylation of phosphatidylinositol 5-phosphate (PtdIns5P) on the fourth hydroxyl of the myo-inositol ring, to form phosphatidylinositol 4,5-bisphosphate (PtdIns(4,5)P2). Has both ATP- and GTP-dependent kinase activities. May exert its function by regulating the levels of PtdIns5P, which functions in the cytosol by increasing AKT activity and in the nucleus signals through ING2. May regulate the pool of cytosolic PtdIns5P in response to the activation of tyrosine phosphorylation. Required for lysosome-peroxisome membrane contacts and intracellular cholesterol transport through modulating peroxisomal PtdIns(4,5)P2 level. In collaboration with PIP4K2B, has a role in mediating autophagy in times of nutrient stress. Required for autophagosome-lysosome fusion and the regulation of cellular lipid metabolism. May be involved in thrombopoiesis, and the terminal maturation of megakaryocytes and regulation of their size. Negatively regulates insulin signaling through a catalytic-independent mechanism. PIP4Ks interact with PIP5Ks and suppress PIP5K-mediated PtdIns(4,5)P2 synthesis and insulin-dependent conversion to PtdIns(3,4,5)P3. The sequence is that of Phosphatidylinositol 5-phosphate 4-kinase type-2 alpha from Homo sapiens (Human).